Consider the following 695-residue polypeptide: UvrABC system protein C (695 aa).

Over residues 1–10 the composition is skewed to basic and acidic residues; the sequence is MNQDPAETRD. The segment at 1–53 is disordered; sequence MNQDPAETRDTAAPPPADTTSPSPVSPELEPRSAPGAQDIDAASASLTVDEDD. The span at 18 to 27 shows a compositional bias: low complexity; that stretch reads DTTSPSPVSP. A GIY-YIG domain is found at 88-166; sequence TSPGVYRMLN…IKQLRPRFNV (79 aa). Positions 276–311 constitute a UVR domain; that stretch reads RAVKQELAVEMEKASNELEFETAALYRDRLAALSAI.

It belongs to the UvrC family. Interacts with UvrB in an incision complex.

The protein localises to the cytoplasm. The UvrABC repair system catalyzes the recognition and processing of DNA lesions. UvrC both incises the 5' and 3' sides of the lesion. The N-terminal half is responsible for the 3' incision and the C-terminal half is responsible for the 5' incision. In Rhodopseudomonas palustris (strain BisB5), this protein is UvrABC system protein C.